The chain runs to 371 residues: Putative transport protein YtvI (371 aa).

Transmembrane regions (helical) follow at residues 6 to 26, 30 to 50, 65 to 85, 168 to 188, 225 to 245, 256 to 276, 283 to 303, 312 to 332, and 334 to 354; these read ITIF…IAAA, FPLT…HPVV, VLGV…ILVA, FFAL…ATFF, GFIK…FIGL, IAFL…SVFV, SITG…VVLI, ILSK…FAGF, and LFGF…QAFI.

Belongs to the autoinducer-2 exporter (AI-2E) (TC 2.A.86) family.

It localises to the cell membrane. This Bacillus subtilis (strain 168) protein is Putative transport protein YtvI (ytvI).